Here is a 197-residue protein sequence, read N- to C-terminus: Phosphoheptose isomerase (197 aa).

Positions 40–197 (CIASIAQGGK…LVEHSIFGKQ (158 aa)) constitute an SIS domain. 55–57 (NGG) lines the substrate pocket. Histidine 64 and glutamate 68 together coordinate Zn(2+). Residues glutamate 68, 97 to 98 (ND), 123 to 125 (STS), serine 128, and glutamine 175 contribute to the substrate site. 2 residues coordinate Zn(2+): glutamine 175 and histidine 183.

It belongs to the SIS family. GmhA subfamily. As to quaternary structure, homotetramer. Requires Zn(2+) as cofactor.

The protein localises to the cytoplasm. It catalyses the reaction 2 D-sedoheptulose 7-phosphate = D-glycero-alpha-D-manno-heptose 7-phosphate + D-glycero-beta-D-manno-heptose 7-phosphate. Its pathway is carbohydrate biosynthesis; D-glycero-D-manno-heptose 7-phosphate biosynthesis; D-glycero-alpha-D-manno-heptose 7-phosphate and D-glycero-beta-D-manno-heptose 7-phosphate from sedoheptulose 7-phosphate: step 1/1. The protein operates within capsule biogenesis; capsule polysaccharide biosynthesis. In terms of biological role, catalyzes the isomerization of sedoheptulose 7-phosphate in D-glycero-D-manno-heptose 7-phosphate. This chain is Phosphoheptose isomerase, found in Burkholderia mallei (strain ATCC 23344).